Consider the following 342-residue polypeptide: C-X-C chemokine receptor type 6 (342 aa).

At 1–32 (MAEHDYHEDYGFSSFNDSSQEEHQDFLQFSKV) the chain is on the extracellular side. N-linked (GlcNAc...) asparagine glycosylation is present at asparagine 16. The chain crosses the membrane as a helical span at residues 33–59 (FLPCMYLVVFVCGLVGNSLVLVISIFY). The Cytoplasmic segment spans residues 60 to 68 (HKLQSLTDV). The helical transmembrane segment at 69–89 (FLVNLPLADLVFVCTLPFWAY) threads the bilayer. The Extracellular segment spans residues 90–103 (AGIHEWVFGQVMCK). A disulfide bond links cysteine 102 and cysteine 180. The helical transmembrane segment at 104-125 (SLLGIYTINFYTSMLILTCITV) threads the bilayer. Over 126-143 (DRFIVVVKATKAYNQQAK) the chain is Cytoplasmic. The helical transmembrane segment at 144-164 (RMTWGKVTSLLIWVISLLVSL) threads the bilayer. Residues 165-187 (PQIIYGNVFNLDKLICGYHDEAI) lie on the Extracellular side of the membrane. The helical transmembrane segment at 188-215 (STVVLATQMTLGFFLPLLTMIVCYSVII) threads the bilayer. Residues 216–231 (KTLLHAGGFQKHRSLK) lie on the Cytoplasmic side of the membrane. The helical transmembrane segment at 232–259 (IIFLVMAVFLLTQMPFNLMKFIRSTHWE) threads the bilayer. Topologically, residues 260–275 (YYAMTSFHYTIMVTEA) are extracellular. A helical membrane pass occupies residues 276–293 (IAYLRACLNPVLYAFVSL). The Cytoplasmic portion of the chain corresponds to 294–342 (KFRKNFWKLVKDIGCLPYLGVSHQWKSSEDNSKTFSASHNVEATSMFQL).

The protein belongs to the G-protein coupled receptor 1 family. Expressed in lymphoid tissues and activated T cells.

The protein resides in the cell membrane. Receptor for the C-X-C chemokine CXCL16. Used as a coreceptor by SIVs and by strains of HIV-2 and m-tropic HIV-1. The sequence is that of C-X-C chemokine receptor type 6 (CXCR6) from Homo sapiens (Human).